The sequence spans 318 residues: 1-aminocyclopropane-1-carboxylate oxidase (318 aa).

The Fe2OG dioxygenase domain occupies 153–253 (PNFGTKVANY…RMSIASFYNP (101 aa)). Fe cation is bound by residues His-177, Asp-179, and His-234.

This sequence belongs to the iron/ascorbate-dependent oxidoreductase family. It depends on Fe cation as a cofactor.

It catalyses the reaction 1-aminocyclopropane-1-carboxylate + L-ascorbate + O2 = ethene + L-dehydroascorbate + hydrogen cyanide + CO2 + 2 H2O. It functions in the pathway alkene biosynthesis; ethylene biosynthesis via S-adenosyl-L-methionine; ethylene from S-adenosyl-L-methionine: step 2/2. The protein is 1-aminocyclopropane-1-carboxylate oxidase (DK-ACO1) of Diospyros kaki (Kaki persimmon).